The primary structure comprises 267 residues: tRNA (guanine-N(1)-)-methyltransferase (267 aa).

S-adenosyl-L-methionine is bound by residues Gly119 and 139-144 (IGDYVL).

It belongs to the RNA methyltransferase TrmD family. Homodimer.

Its subcellular location is the cytoplasm. It carries out the reaction guanosine(37) in tRNA + S-adenosyl-L-methionine = N(1)-methylguanosine(37) in tRNA + S-adenosyl-L-homocysteine + H(+). In terms of biological role, specifically methylates guanosine-37 in various tRNAs. The chain is tRNA (guanine-N(1)-)-methyltransferase from Chromohalobacter salexigens (strain ATCC BAA-138 / DSM 3043 / CIP 106854 / NCIMB 13768 / 1H11).